The chain runs to 137 residues: Large-conductance mechanosensitive channel (137 aa).

The Cytoplasmic segment spans residues 1-16; that stretch reads MSIIKEFREFAMRGNV. Residues 17-45 form a helical membrane-spanning segment; sequence VDLAVGVIIGALFGKIVSSLVSDIIMPPL. The Periplasmic portion of the chain corresponds to 46 to 74; it reads GLLIGGVDFKQFALFLRNAQGGIPAVVMN. The chain crosses the membrane as a helical span at residues 75–94; it reads YGAFIQNIFDFIIVAFAIFI. Residues 95–137 are Cytoplasmic-facing; that stretch reads AIKLMNKMRCKQEDTPAAPPKPSAEEKLLAEIRDLLKEQQTRQ.

It belongs to the MscL family. Homopentamer.

The protein localises to the cell inner membrane. Its function is as follows. Channel that opens in response to stretch forces in the membrane lipid bilayer. Forms a nonselective ion channel with a conductance of about 4 nanosiemens. May participate in the regulation of osmotic pressure changes within the cell. The polypeptide is Large-conductance mechanosensitive channel (Pectobacterium carotovorum (Erwinia carotovora)).